The primary structure comprises 135 residues: Ribosome-binding factor A (135 aa).

It belongs to the RbfA family. As to quaternary structure, monomer. Binds 30S ribosomal subunits, but not 50S ribosomal subunits or 70S ribosomes.

The protein resides in the cytoplasm. Functionally, one of several proteins that assist in the late maturation steps of the functional core of the 30S ribosomal subunit. Associates with free 30S ribosomal subunits (but not with 30S subunits that are part of 70S ribosomes or polysomes). Required for efficient processing of 16S rRNA. May interact with the 5'-terminal helix region of 16S rRNA. The protein is Ribosome-binding factor A of Aliivibrio fischeri (strain MJ11) (Vibrio fischeri).